The primary structure comprises 505 residues: L-amino-acid oxidase (505 aa).

Residues 1-18 form the signal peptide; it reads MNVFLMFSLLFLAALGSC. A disulfide bond links Cys28 and Cys191. FAD-binding positions include 61–62, 81–82, Arg89, and 105–108; these read MS, EA, and GPMR. A substrate-binding site is contributed by Arg108. N-linked (GlcNAc...) asparagine glycosylation occurs at Asn190. Residue His241 participates in substrate binding. Position 279 (Val279) interacts with FAD. A disulfide bridge connects residues Cys349 and Cys430. An N-linked (GlcNAc...) asparagine glycan is attached at Asn379. Tyr390 lines the substrate pocket. Residues Glu475 and 482–487 each bind FAD; that span reads GWIDST. 482–483 lines the substrate pocket; the sequence is GW.

The protein belongs to the flavin monoamine oxidase family. FIG1 subfamily. In terms of assembly, monomer. This is in contrast with most of its orthologs, that are non-covalently linked homodimers. FAD serves as cofactor. In terms of processing, N-glycosylated. Expressed by the venom gland.

It is found in the secreted. It carries out the reaction an L-alpha-amino acid + O2 + H2O = a 2-oxocarboxylate + H2O2 + NH4(+). It catalyses the reaction L-leucine + O2 + H2O = 4-methyl-2-oxopentanoate + H2O2 + NH4(+). In terms of biological role, catalyzes an oxidative deamination of predominantly hydrophobic and aromatic L-amino acids, thus producing hydrogen peroxide that may contribute to the diverse toxic effects of this enzyme. Shows activity on L-Leu. Exhibits diverse biological activities, such as hemorrhage, edema, antibacterial and antiparasitic activities, as well as regulation of platelet aggregation. Effects of snake L-amino oxidases on platelets are controversial, since they either induce aggregation or inhibit agonist-induced aggregation. These different effects are probably due to different experimental conditions. This protein has an ability to induce hemolysis and apoptosis. This is L-amino-acid oxidase from Protobothrops flavoviridis (Habu).